The chain runs to 251 residues: Cathelicidin-B1 (251 aa).

The first 20 residues, 1-20 (MGRMWASEVLLLLLLGSSRA), serve as a signal peptide directing secretion. A propeptide spanning residues 21–211 (VTPGLDVSTA…ELRCRPLRPQ (191 aa)) is cleaved from the precursor. Residues 29 to 109 (TAPGLDGSIP…TITPKQDGSI (81 aa)) are disordered. Disulfide bonds link Cys-172–Cys-181 and Cys-189–Cys-205.

This sequence belongs to the cathelicidin family. As to expression, detected in bursa of Fabricius, in filamentous structures surrounding the basal and lateral surfaces of bursal M cells (at protein level). Detected in bursa of Fabricius, in secretory enterocytes of the interfollicular bursal epithelium, but not in M cells.

Its subcellular location is the secreted. Has potent antimicrobial activity against Gram-positive and Gram-negative bacteria (in vitro). May play a role in the innate immune response. This is Cathelicidin-B1 (CATHB1) from Gallus gallus (Chicken).